We begin with the raw amino-acid sequence, 763 residues long: Xaa-Pro dipeptidyl-peptidase (763 aa).

Active-site charge relay system residues include serine 348, aspartate 468, and histidine 498.

The protein belongs to the peptidase S15 family. Homodimer.

The protein resides in the cytoplasm. It catalyses the reaction Hydrolyzes Xaa-Pro-|- bonds to release unblocked, N-terminal dipeptides from substrates including Ala-Pro-|-p-nitroanilide and (sequentially) Tyr-Pro-|-Phe-Pro-|-Gly-Pro-|-Ile.. Removes N-terminal dipeptides sequentially from polypeptides having unsubstituted N-termini provided that the penultimate residue is proline. This Lactococcus lactis subsp. cremoris (strain SK11) protein is Xaa-Pro dipeptidyl-peptidase.